Reading from the N-terminus, the 460-residue chain is ATP synthase subunit beta (460 aa).

149–156 serves as a coordination point for ATP; it reads GGAGVGKT.

It belongs to the ATPase alpha/beta chains family. F-type ATPases have 2 components, CF(1) - the catalytic core - and CF(0) - the membrane proton channel. CF(1) has five subunits: alpha(3), beta(3), gamma(1), delta(1), epsilon(1). CF(0) has three main subunits: a(1), b(2) and c(9-12). The alpha and beta chains form an alternating ring which encloses part of the gamma chain. CF(1) is attached to CF(0) by a central stalk formed by the gamma and epsilon chains, while a peripheral stalk is formed by the delta and b chains.

It localises to the cell membrane. The enzyme catalyses ATP + H2O + 4 H(+)(in) = ADP + phosphate + 5 H(+)(out). Functionally, produces ATP from ADP in the presence of a proton gradient across the membrane. The catalytic sites are hosted primarily by the beta subunits. The sequence is that of ATP synthase subunit beta from Acholeplasma laidlawii (strain PG-8A).